Here is a 359-residue protein sequence, read N- to C-terminus: Bergaptol O-methyltransferase (359 aa).

Histidine 126 contacts bergaptol. The S-adenosyl-L-homocysteine site is built by serine 179, glycine 203, aspartate 226, aspartate 246, and lysine 260. Histidine 264 is a binding site for bergaptol. The active-site Proton acceptor is histidine 264.

The protein belongs to the class I-like SAM-binding methyltransferase superfamily. Cation-independent O-methyltransferase family. COMT subfamily.

The enzyme catalyses a 5-hydroxyfurocoumarin + S-adenosyl-L-methionine = a 5-methoxyfurocoumarin + S-adenosyl-L-homocysteine + H(+). The catalysed reaction is bergaptol + S-adenosyl-L-methionine = bergapten + S-adenosyl-L-homocysteine. With respect to regulation, inhibited by Cu(2+), Ni(2+) and Co(2+). This chain is Bergaptol O-methyltransferase, found in Glehnia littoralis (Beach silvertop).